Here is a 387-residue protein sequence, read N- to C-terminus: Type 2 DNA topoisomerase 6 subunit A (387 aa).

One can recognise a Topo IIA-type catalytic domain in the interval 12–160; sequence EARKKALAVF…MLILSKEKGK (149 aa). The active-site O-(5'-phospho-DNA)-tyrosine intermediate is tyrosine 106. Glutamate 207 and aspartate 259 together coordinate Mg(2+).

Belongs to the TOP6A family. In terms of assembly, homodimer. Heterotetramer of two Top6A and two Top6B chains. It depends on Mg(2+) as a cofactor.

The catalysed reaction is ATP-dependent breakage, passage and rejoining of double-stranded DNA.. In terms of biological role, relaxes both positive and negative superturns and exhibits a strong decatenase activity. In Hyperthermus butylicus (strain DSM 5456 / JCM 9403 / PLM1-5), this protein is Type 2 DNA topoisomerase 6 subunit A.